The sequence spans 66 residues: Nigrocin-2GRa (66 aa).

A signal peptide spans 1–22; sequence MFTLKKSQLLLFFPGTINLSLC. Residues 23–45 constitute a propeptide that is removed on maturation; that stretch reads QDETNAEEERRDEEVAKMEEIKR. Residues C60 and C66 are joined by a disulfide bond.

In terms of tissue distribution, expressed by the skin glands.

The protein resides in the secreted. Functionally, antimicrobial peptide active at least against the Gram-positive bacterium S.aureus but with otherwise unclear activity spectrum. Lacks hemolytic activity against rabbit or human erythrocytes. In Odorrana grahami (Yunnanfu frog), this protein is Nigrocin-2GRa.